The following is a 319-amino-acid chain: MDGVIKSIFTFILIVEFIIGNLGNSFIVLVNCIDWVKRRKISLVDQILIALAISRISLVWSIFGSWCVSVFFPALFATEKLLRMLTNIWTVTNHFSVWLATILGTFYFLKIANFSNSIFLYLKWRVKKVVLVLLLVTLGLLFLNILLINIHINASINGYRGNMTCSSASCNFIRFSRAIALTSTVFVLIPFTLSLATSLLLSFSLWKHHKKMQHTVKGYRDVSTKAHRGVMQTVITFLLLYAVFLLTFFISIWASVRLKENQIIILSEMMGLAYPSGHSCVLILGNKKLRQASLSVLWWLRYRFKHGEPSGHKEFRESS.

Residues 1–7 are Extracellular-facing; sequence MDGVIKS. The helical transmembrane segment at 8–28 threads the bilayer; sequence IFTFILIVEFIIGNLGNSFIV. Topologically, residues 29-55 are cytoplasmic; sequence LVNCIDWVKRRKISLVDQILIALAISR. A helical transmembrane segment spans residues 56 to 76; it reads ISLVWSIFGSWCVSVFFPALF. Topologically, residues 77–87 are extracellular; it reads ATEKLLRMLTN. Cholesterol-binding residues include threonine 86 and tryptophan 89. A helical transmembrane segment spans residues 88-108; sequence IWTVTNHFSVWLATILGTFYF. Residues 109–129 are Cytoplasmic-facing; it reads LKIANFSNSIFLYLKWRVKKV. The chain crosses the membrane as a helical span at residues 130 to 150; that stretch reads VLVLLLVTLGLLFLNILLINI. Over 151-184 the chain is Extracellular; it reads HINASINGYRGNMTCSSASCNFIRFSRAIALTST. N-linked (GlcNAc...) asparagine glycans are attached at residues asparagine 153 and asparagine 162. A cholesterol-binding site is contributed by alanine 180. The helical transmembrane segment at 185–205 threads the bilayer; it reads VFVLIPFTLSLATSLLLSFSL. Residues 206 to 233 lie on the Cytoplasmic side of the membrane; that stretch reads WKHHKKMQHTVKGYRDVSTKAHRGVMQT. Residues 234–254 traverse the membrane as a helical segment; that stretch reads VITFLLLYAVFLLTFFISIWA. Residues 255–263 lie on the Extracellular side of the membrane; the sequence is SVRLKENQI. A helical membrane pass occupies residues 264-284; it reads IILSEMMGLAYPSGHSCVLIL. Residues serine 267 and methionine 270 each coordinate cholesterol. At 285-319 the chain is on the cytoplasmic side; it reads GNKKLRQASLSVLWWLRYRFKHGEPSGHKEFRESS.

The protein belongs to the G-protein coupled receptor T2R family. Core component of the TAS2R14-GNAI1 complex, consisting of TAS2R14, GNAI1, GNB1 and GNG2; within the complex interacts with GNAI1. Core component of the TAS2R14-GNAT3 complex, consisting of TAS2R14, GNAT3, GNB1 and GNG2; within the complex interacts with GNAT3. Core component of the TAS2R14-GNAS2 complex, consisting of TAS2R14, GNAS2, GNB1 and GNG2; within the complex interacts with GNAS2.

The protein resides in the membrane. The catalysed reaction is Ca(2+)(in) = Ca(2+)(out). The enzyme catalyses 3',5'-cyclic AMP(in) = 3',5'-cyclic AMP(out). Basal activity is enhanced by binding to bitter tastants, such as flufenamic acid and aristolochic acid. Regulated by cholesterol in a concentration-dependent manner. Its function is as follows. Gustducin-linked G-protein coupled receptor that plays a role in the perception of bitterness. The activity of this receptor stimulates GNAT3, activating the gustducin G-protein pathway. Likely plays a role in sensing the chemical composition of the gastrointestinal content and other extra-oral tissues via the inhibitory G-protein pathways. The sequence is that of Taste receptor type 2 member 14 (TAS2R14) from Macaca mulatta (Rhesus macaque).